A 203-amino-acid chain; its full sequence is Ribosomal RNA small subunit methyltransferase G (203 aa).

Residues Gly73, Leu78, 124–125 (VE), and Arg139 each bind S-adenosyl-L-methionine.

It belongs to the methyltransferase superfamily. RNA methyltransferase RsmG family.

Its subcellular location is the cytoplasm. It carries out the reaction guanosine(527) in 16S rRNA + S-adenosyl-L-methionine = N(7)-methylguanosine(527) in 16S rRNA + S-adenosyl-L-homocysteine. Functionally, specifically methylates the N7 position of guanine in position 527 of 16S rRNA. The protein is Ribosomal RNA small subunit methyltransferase G of Haemophilus influenzae (strain PittEE).